The following is a 438-amino-acid chain: Gamma-glutamyl phosphate reductase (438 aa).

The interval 1–21 (MTAQTSSDVTDQKTDLTRESE) is disordered. Basic and acidic residues predominate over residues 10–21 (TDQKTDLTRESE).

It belongs to the gamma-glutamyl phosphate reductase family.

The protein localises to the cytoplasm. The enzyme catalyses L-glutamate 5-semialdehyde + phosphate + NADP(+) = L-glutamyl 5-phosphate + NADPH + H(+). It participates in amino-acid biosynthesis; L-proline biosynthesis; L-glutamate 5-semialdehyde from L-glutamate: step 2/2. Functionally, catalyzes the NADPH-dependent reduction of L-glutamate 5-phosphate into L-glutamate 5-semialdehyde and phosphate. The product spontaneously undergoes cyclization to form 1-pyrroline-5-carboxylate. This chain is Gamma-glutamyl phosphate reductase, found in Corynebacterium efficiens (strain DSM 44549 / YS-314 / AJ 12310 / JCM 11189 / NBRC 100395).